The primary structure comprises 74 residues: Tau-AnmTx Ueq 12-1 (74 aa).

The N-terminal stretch at 1-18 (MCLLMLVLGAMYVQGWHS) is a signal peptide. Positions 19–27 (AGFGKRTLK) are cleaved as a propeptide — removed in mature form. Intrachain disulfides connect Cys-30-Cys-37, Cys-40-Cys-71, Cys-46-Cys-64, Cys-51-Cys-72, and Cys-58-Cys-73.

The protein belongs to the Cnidaria small cysteine-rich protein (SCRiP) family. Detected in mucus secreted from ectoderm.

The protein resides in the secreted. Functionally, potentiates activation of mammalian TRPA1, a non-selective cation channel involved in perception of pain, in vitro yet has an analgesic and anti-inflammatory effect in vivo. Has antibacterial activity against C.glutamicum (MIC=50 uM) and, to a lesser extent, against S.aureus but not against P.aeruginosa or E.coli. The polypeptide is Tau-AnmTx Ueq 12-1 (Urticina eques (Sea anemone)).